A 481-amino-acid chain; its full sequence is NADH-quinone oxidoreductase subunit N (481 aa).

Helical transmembrane passes span Leu14–Phe34, Ile38–Ala57, Phe76–Phe96, Pro108–Leu128, Phe162–Phe182, Met204–His224, Pro235–Leu255, Ile272–Thr292, Leu297–Ser317, Ala323–Leu343, Leu369–Phe389, Gly403–Leu423, and Gly449–Leu469.

The protein belongs to the complex I subunit 2 family. NDH-1 is composed of 14 different subunits. Subunits NuoA, H, J, K, L, M, N constitute the membrane sector of the complex.

The protein resides in the cell inner membrane. It carries out the reaction a quinone + NADH + 5 H(+)(in) = a quinol + NAD(+) + 4 H(+)(out). Its function is as follows. NDH-1 shuttles electrons from NADH, via FMN and iron-sulfur (Fe-S) centers, to quinones in the respiratory chain. The immediate electron acceptor for the enzyme in this species is believed to be ubiquinone. Couples the redox reaction to proton translocation (for every two electrons transferred, four hydrogen ions are translocated across the cytoplasmic membrane), and thus conserves the redox energy in a proton gradient. The protein is NADH-quinone oxidoreductase subunit N of Rhizorhabdus wittichii (strain DSM 6014 / CCUG 31198 / JCM 15750 / NBRC 105917 / EY 4224 / RW1) (Sphingomonas wittichii).